Here is a 183-residue protein sequence, read N- to C-terminus: Peptidyl-tRNA hydrolase (183 aa).

Residue Tyr-14 coordinates tRNA. His-19 serves as the catalytic Proton acceptor. Residues Tyr-55 and Asn-57 each coordinate tRNA.

The protein belongs to the PTH family. Monomer.

Its subcellular location is the cytoplasm. The catalysed reaction is an N-acyl-L-alpha-aminoacyl-tRNA + H2O = an N-acyl-L-amino acid + a tRNA + H(+). Its function is as follows. Hydrolyzes ribosome-free peptidyl-tRNAs (with 1 or more amino acids incorporated), which drop off the ribosome during protein synthesis, or as a result of ribosome stalling. Functionally, catalyzes the release of premature peptidyl moieties from peptidyl-tRNA molecules trapped in stalled 50S ribosomal subunits, and thus maintains levels of free tRNAs and 50S ribosomes. The polypeptide is Peptidyl-tRNA hydrolase (Thermus thermophilus (strain ATCC BAA-163 / DSM 7039 / HB27)).